Reading from the N-terminus, the 224-residue chain is Orotate phosphoribosyltransferase (224 aa).

Lys-29 provides a ligand contact to 5-phospho-alpha-D-ribose 1-diphosphate. An orotate-binding site is contributed by 37–38 (FF). Residues 75-76 (YK), Arg-105, Lys-106, Lys-109, His-111, and 130-138 (DDVITAGTS) each bind 5-phospho-alpha-D-ribose 1-diphosphate. Orotate-binding residues include Thr-134 and Arg-162.

The protein belongs to the purine/pyrimidine phosphoribosyltransferase family. PyrE subfamily. As to quaternary structure, homodimer. It depends on Mg(2+) as a cofactor.

It carries out the reaction orotidine 5'-phosphate + diphosphate = orotate + 5-phospho-alpha-D-ribose 1-diphosphate. It participates in pyrimidine metabolism; UMP biosynthesis via de novo pathway; UMP from orotate: step 1/2. Its function is as follows. Catalyzes the transfer of a ribosyl phosphate group from 5-phosphoribose 1-diphosphate to orotate, leading to the formation of orotidine monophosphate (OMP). In Bordetella pertussis (strain Tohama I / ATCC BAA-589 / NCTC 13251), this protein is Orotate phosphoribosyltransferase.